The primary structure comprises 454 residues: tRNA modification GTPase MnmE (454 aa).

(6S)-5-formyl-5,6,7,8-tetrahydrofolate contacts are provided by Arg-23, Glu-80, and Lys-120. Residues 216–377 form the TrmE-type G domain; that stretch reads GMKVVIAGRP…LRDHLKSSMG (162 aa). Asn-226 is a binding site for K(+). GTP contacts are provided by residues 226-231, 245-251, 270-273, 335-338, and 358-360; these read NAGKSS, TDIAGTT, DTAG, NKAD, and SAR. Mg(2+) is bound at residue Ser-230. Residues Thr-245, Ile-247, and Thr-250 each coordinate K(+). A Mg(2+)-binding site is contributed by Thr-251. Lys-454 contacts (6S)-5-formyl-5,6,7,8-tetrahydrofolate.

It belongs to the TRAFAC class TrmE-Era-EngA-EngB-Septin-like GTPase superfamily. TrmE GTPase family. Homodimer. Heterotetramer of two MnmE and two MnmG subunits. The cofactor is K(+).

It localises to the cytoplasm. Its function is as follows. Exhibits a very high intrinsic GTPase hydrolysis rate. Involved in the addition of a carboxymethylaminomethyl (cmnm) group at the wobble position (U34) of certain tRNAs, forming tRNA-cmnm(5)s(2)U34. The protein is tRNA modification GTPase MnmE of Erwinia tasmaniensis (strain DSM 17950 / CFBP 7177 / CIP 109463 / NCPPB 4357 / Et1/99).